We begin with the raw amino-acid sequence, 263 residues long: Putative S-adenosyl-L-methionine-dependent methyltransferase Mkms_0098 (263 aa).

S-adenosyl-L-methionine contacts are provided by residues Asp-121 and 150–151; that span reads ES.

It belongs to the UPF0677 family.

In terms of biological role, exhibits S-adenosyl-L-methionine-dependent methyltransferase activity. The chain is Putative S-adenosyl-L-methionine-dependent methyltransferase Mkms_0098 from Mycobacterium sp. (strain KMS).